The primary structure comprises 291 residues: Kynurenine formamidase (291 aa).

The short motif at histidine 33–tryptophan 37 is the HGGXW element. Serine 107 (nucleophile) is an active-site residue. Residues aspartate 242 and histidine 280 contribute to the active site.

This sequence belongs to the kynurenine formamidase family. As to quaternary structure, homodimer.

It carries out the reaction N-formyl-L-kynurenine + H2O = L-kynurenine + formate + H(+). It participates in amino-acid degradation; L-tryptophan degradation via kynurenine pathway; L-kynurenine from L-tryptophan: step 2/2. Its function is as follows. Catalyzes the hydrolysis of N-formyl-L-kynurenine to L-kynurenine, the second step in the kynurenine pathway of tryptophan degradation. Kynurenine may be further oxidized to nicotinic acid, NAD(H) and NADP(H). Required for elimination of toxic metabolites. This is Kynurenine formamidase from Debaryomyces hansenii (strain ATCC 36239 / CBS 767 / BCRC 21394 / JCM 1990 / NBRC 0083 / IGC 2968) (Yeast).